A 499-amino-acid polypeptide reads, in one-letter code: Probable dipeptidase B (499 aa).

Residue C26 is part of the active site.

It belongs to the peptidase C69 family.

The catalysed reaction is an L-aminoacyl-L-amino acid + H2O = 2 an L-alpha-amino acid. The protein is Probable dipeptidase B (pepDB) of Streptococcus pyogenes serotype M18 (strain MGAS8232).